The following is a 135-amino-acid chain: Transcription antitermination protein NusB (135 aa).

This sequence belongs to the NusB family.

In terms of biological role, involved in transcription antitermination. Required for transcription of ribosomal RNA (rRNA) genes. Binds specifically to the boxA antiterminator sequence of the ribosomal RNA (rrn) operons. This chain is Transcription antitermination protein NusB, found in Nocardioides sp. (strain ATCC BAA-499 / JS614).